The primary structure comprises 292 residues: 4-hydroxy-tetrahydrodipicolinate synthase (292 aa).

A pyruvate-binding site is contributed by Thr44. Tyr132 serves as the catalytic Proton donor/acceptor. Residue Lys160 is the Schiff-base intermediate with substrate of the active site. Ile202 serves as a coordination point for pyruvate.

The protein belongs to the DapA family. In terms of assembly, homotetramer; dimer of dimers.

The protein localises to the cytoplasm. It carries out the reaction L-aspartate 4-semialdehyde + pyruvate = (2S,4S)-4-hydroxy-2,3,4,5-tetrahydrodipicolinate + H2O + H(+). It functions in the pathway amino-acid biosynthesis; L-lysine biosynthesis via DAP pathway; (S)-tetrahydrodipicolinate from L-aspartate: step 3/4. Catalyzes the condensation of (S)-aspartate-beta-semialdehyde [(S)-ASA] and pyruvate to 4-hydroxy-tetrahydrodipicolinate (HTPA). This Magnetococcus marinus (strain ATCC BAA-1437 / JCM 17883 / MC-1) protein is 4-hydroxy-tetrahydrodipicolinate synthase.